The primary structure comprises 495 residues: Steroid 21-hydroxylase (495 aa).

2 residues coordinate heme b: R92 and K121. R234 contacts 17alpha-hydroxyprogesterone. R234 contacts progesterone. Residues H366, R427, and C429 each coordinate heme b.

The protein belongs to the cytochrome P450 family. The cofactor is heme b.

The protein resides in the endoplasmic reticulum membrane. It localises to the microsome membrane. It catalyses the reaction progesterone + reduced [NADPH--hemoprotein reductase] + O2 = 21-hydroxyprogesterone + oxidized [NADPH--hemoprotein reductase] + H2O + H(+). The catalysed reaction is 17alpha-hydroxyprogesterone + reduced [NADPH--hemoprotein reductase] + O2 = 11-deoxycortisol + oxidized [NADPH--hemoprotein reductase] + H2O + H(+). In terms of biological role, a cytochrome P450 monooxygenase that plays a major role in adrenal steroidogenesis. Catalyzes the hydroxylation at C-21 of progesterone and 17alpha-hydroxyprogesterone to respectively form 11-deoxycorticosterone and 11-deoxycortisol, intermediate metabolites in the biosynthetic pathway of mineralocorticoids and glucocorticoids. Mechanistically, uses molecular oxygen inserting one oxygen atom into a substrate, and reducing the second into a water molecule, with two electrons provided by NADPH via cytochrome P450 reductase (CPR; NADPH-ferrihemoprotein reductase). The polypeptide is Steroid 21-hydroxylase (CYP21A2) (Homo sapiens (Human)).